Consider the following 476-residue polypeptide: Cysteine--tRNA ligase (476 aa).

Cys30 contacts Zn(2+). Residues 32 to 42 carry the 'HIGH' region motif; the sequence is PTVYNYIHIGN. The Zn(2+) site is built by Cys215, His240, and Glu244. Positions 274–278 match the 'KMSKS' region motif; it reads KMSKS. Residue Lys277 coordinates ATP.

It belongs to the class-I aminoacyl-tRNA synthetase family. Monomer. Requires Zn(2+) as cofactor.

Its subcellular location is the cytoplasm. The enzyme catalyses tRNA(Cys) + L-cysteine + ATP = L-cysteinyl-tRNA(Cys) + AMP + diphosphate. This is Cysteine--tRNA ligase from Lactobacillus helveticus (strain DPC 4571).